A 455-amino-acid chain; its full sequence is Periplasmic pH-dependent serine endoprotease DegQ (455 aa).

The signal sequence occupies residues 1–27; that stretch reads MKKQTQLLSALALSVGLTLSASFQAVA. Residues E59, H109, D139, G212, 212 to 214, 230 to 234, and 269 to 273 each bind substrate; these read GNS, TAILA, and LGIKG. Catalysis depends on charge relay system residues H109 and D139. S214 serves as the catalytic Charge relay system. PDZ domains lie at 258 to 349 and 355 to 447; these read LIDF…LRNG and EVTL…VRGN.

It belongs to the peptidase S1C family. In terms of assembly, degQ can reversibly switch between different oligomeric forms that represent inactive (6-mer) and active (12- and 24-mer) protease states. Substrate binding triggers the conversion of the resting DegQ trimer and hexamer into catalytically active 12- and 24-mers. The conversion of 6-mer (DegQ6) into 12-mer (DegQ12) or 24-mer (DegQ24) is crucial in regulating protease activity.

The protein resides in the periplasm. The catalysed reaction is Acts on substrates that are at least partially unfolded. The cleavage site P1 residue is normally between a pair of hydrophobic residues, such as Val-|-Val.. With respect to regulation, inhibited by diisopropylfluorophosphate (DFP). Functionally, degQ could degrade transiently denatured and unfolded proteins which accumulate in the periplasm following stress conditions. DegQ is efficient with Val-Xaa and Ile-Xaa peptide bonds, suggesting a preference for a beta-branched side chain amino acids. Only unfolded proteins devoid of disulfide bonds appear capable to be cleaved, thereby preventing non-specific proteolysis of folded proteins. DegQ can substitute for the periplasmic protease DegP. This is Periplasmic pH-dependent serine endoprotease DegQ (degQ) from Escherichia coli (strain K12).